The following is a 274-amino-acid chain: Coiled-coil domain-containing protein 28A (274 aa).

Residues 121 to 166 form a disordered region; it reads VSKSTGFSNPASQSTSQRPKLKRVMKEKTKPQGGEGKGAQSTPIQH. Positions 122-138 are enriched in polar residues; sequence SKSTGFSNPASQSTSQR. A coiled-coil region spans residues 234 to 263; the sequence is KRKTASDSNLDRLLSDLEELNSSIQKLHLA.

The sequence is that of Coiled-coil domain-containing protein 28A (CCDC28A) from Homo sapiens (Human).